A 184-amino-acid polypeptide reads, in one-letter code: Ras-related protein Rap-1b (184 aa).

A GTP-binding site is contributed by glycine 10–alanine 18. The segment at glutamine 25 to methionine 67 is interaction with KRIT1. Residues tyrosine 32 to tyrosine 40 carry the Effector region motif. Serine 39 is subject to ADP-ribosylserine; by botulinum toxin. Residues aspartate 57–threonine 61, asparagine 116–aspartate 119, and serine 147–lysine 149 each bind GTP. Phosphoserine; by PKA is present on serine 179. Cysteine 181 is modified (cysteine methyl ester). A lipid anchor (S-geranylgeranyl cysteine) is attached at cysteine 181. Residues glutamine 182 to leucine 184 constitute a propeptide, removed in mature form.

It belongs to the small GTPase superfamily. Ras family. As to quaternary structure, heterodimer with RAP1GAP. Interacts with EPAC2. Interacts with SGSM1. Interacts with SGSM2. Interacts with SGSM3. Interacts with KRIT1. Interacts with RAP1GDS1.

The protein resides in the cell membrane. Its subcellular location is the cytoplasm. The protein localises to the cytosol. It is found in the cell junction. The enzyme catalyses GTP + H2O = GDP + phosphate + H(+). Activated by guanine nucleotide-exchange factor (GEF) EPAC2 in a cAMP-dependent manner. GTP-binding protein that possesses intrinsic GTPase activity. Contributes to the polarizing activity of KRIT1 and CDH5 in the establishment and maintenance of correct endothelial cell polarity and vascular lumen. Required for the localization of phosphorylated PRKCZ, PARD3 and TIAM1 to the cell junction. Plays a role in the establishment of basal endothelial barrier function. This Rattus norvegicus (Rat) protein is Ras-related protein Rap-1b (Rap1b).